Here is a 578-residue protein sequence, read N- to C-terminus: Thiol:disulfide interchange protein DsbD (578 aa).

The signal sequence occupies residues Met1–Ala24. 2 disulfide bridges follow: Cys134-Cys140 and Cys195-Cys317. The next 9 membrane-spanning stretches (helical) occupy residues Ala183 to Ile203, Ile219 to Leu239, Tyr256 to Tyr276, Gly297 to Cys317, Thr318 to Gly338, Gly339 to Phe359, Trp370 to Leu390, Val397 to Leu417, and Ala421 to Ala441. The Thioredoxin domain occupies Leu438–Arg578. Cys493 and Cys496 are disulfide-bonded.

It belongs to the thioredoxin family. DsbD subfamily.

Its subcellular location is the cell inner membrane. It carries out the reaction [protein]-dithiol + NAD(+) = [protein]-disulfide + NADH + H(+). It catalyses the reaction [protein]-dithiol + NADP(+) = [protein]-disulfide + NADPH + H(+). Its function is as follows. Required to facilitate the formation of correct disulfide bonds in some periplasmic proteins and for the assembly of the periplasmic c-type cytochromes. Acts by transferring electrons from cytoplasmic thioredoxin to the periplasm. This transfer involves a cascade of disulfide bond formation and reduction steps. The chain is Thiol:disulfide interchange protein DsbD from Yersinia enterocolitica serotype O:8 / biotype 1B (strain NCTC 13174 / 8081).